The chain runs to 367 residues: tRNA-specific 2-thiouridylase MnmA (367 aa).

Residues 12 to 19 (GMSGGVDS) and methionine 38 contribute to the ATP site. Residues 98–100 (NPD) form an interaction with target base in tRNA region. Cysteine 103 serves as the catalytic Nucleophile. Cysteine 103 and cysteine 200 are joined by a disulfide. Glycine 128 serves as a coordination point for ATP. Residues 150-152 (KDQ) form an interaction with tRNA region. Cysteine 200 (cysteine persulfide intermediate) is an active-site residue. The segment at 312–313 (RY) is interaction with tRNA.

The protein belongs to the MnmA/TRMU family. As to quaternary structure, interacts with TusE.

It localises to the cytoplasm. The catalysed reaction is S-sulfanyl-L-cysteinyl-[protein] + uridine(34) in tRNA + AH2 + ATP = 2-thiouridine(34) in tRNA + L-cysteinyl-[protein] + A + AMP + diphosphate + H(+). Catalyzes the 2-thiolation of uridine at the wobble position (U34) of tRNA(Lys), tRNA(Glu) and tRNA(Gln), leading to the formation of s(2)U34, the first step of tRNA-mnm(5)s(2)U34 synthesis. Sulfur is provided by IscS, via a sulfur-relay system. Binds ATP and its substrate tRNAs. In Photorhabdus laumondii subsp. laumondii (strain DSM 15139 / CIP 105565 / TT01) (Photorhabdus luminescens subsp. laumondii), this protein is tRNA-specific 2-thiouridylase MnmA.